The following is a 165-amino-acid chain: Anaerobic nitrite reductase GLB1 (165 aa).

A Globin domain is found at 12 to 162 (VFGEEQEALV…LVAAIKREMK (151 aa)). The Homodimerization signature appears at 45–49 (EIAPS). Positions 55, 69, 73, 103, 107, and 108 each coordinate heme b. The Homodimerization signature appears at 115-127 (DGHFEVTGFALLE).

Belongs to the plant globin family. In terms of assembly, homodimer. Heme b serves as cofactor. In vegetative but not in embryonic organs.

It localises to the cytoplasm. The protein resides in the nucleus. It carries out the reaction Fe(III)-heme b-[protein] + nitric oxide + H2O = Fe(II)-heme b-[protein] + nitrite + 2 H(+). In terms of biological role, phytoglobin that reduces nitrite to nitric oxide (NO) under anoxic conditions (e.g. during flooding or in waterlogged soil). May not function as an oxygen storage or transport protein. Has an unusually high affinity for O(2) through an hexacoordinate heme iron because of a very low dissociation constant. This is Anaerobic nitrite reductase GLB1 (HB) from Zea mays subsp. parviglumis (Balsas teosinte).